The following is a 399-amino-acid chain: Protein LIGULELESS 1 (399 aa).

A disordered region spans residues 1 to 28 (MMNLSAAANGRDEFPPYVVPSNAAAPPP). Over residues 15–24 (PPYVVPSNAA) the composition is skewed to low complexity. The segment at 182–260 (PPRCQAEGCK…ADHNRRRRKS (79 aa)) adopts an SBP-type zinc-finger fold. Positions 185, 190, 207, 210, 227, 230, 234, and 246 each coordinate Zn(2+). Residues 243–259 (KKSCRKRLADHNRRRRK) carry the Bipartite nuclear localization signal motif. The interval 250 to 292 (LADHNRRRRKSKPSDADAGDKKRAHANKAAAAKDKAESSSKNM) is disordered. The span at 261-270 (KPSDADAGDK) shows a compositional bias: basic and acidic residues.

Leaf ligular region, blade and sheath.

The protein localises to the nucleus. Involved in the formation of ligules and auricles during leaf organogenesis. This is Protein LIGULELESS 1 (LG1) from Zea mays (Maize).